We begin with the raw amino-acid sequence, 239 residues long: Trimethylguanosine synthase (239 aa).

This sequence belongs to the methyltransferase superfamily. Trimethylguanosine synthase family. Monomer. Interacts with mug174; both proteins are required to maintain Cajal body integrity.

It localises to the nucleus. It is found in the cajal body. The catalysed reaction is a 5'-end (N(7)-methyl 5'-triphosphoguanosine)-ribonucleoside in snRNA + S-adenosyl-L-methionine = a 5'-end (N(2),N(7)-dimethyl 5'-triphosphoguanosine)-ribonucleoside in snRNA + S-adenosyl-L-homocysteine + H(+). It catalyses the reaction a 5'-end (N(7)-methyl 5'-triphosphoguanosine)-ribonucleoside in snoRNA + S-adenosyl-L-methionine = a 5'-end (N(2),N(7)-dimethyl 5'-triphosphoguanosine)-ribonucleoside in snoRNA + S-adenosyl-L-homocysteine + H(+). The enzyme catalyses a 5'-end (N(2),N(7)-dimethyl 5'-triphosphoguanosine)-ribonucleoside in snRNA + S-adenosyl-L-methionine = a 5'-end (N(2),N(2),N(7)-trimethyl 5'-triphosphoguanosine)-ribonucleoside in snRNA + S-adenosyl-L-homocysteine + H(+). It carries out the reaction a 5'-end (N(2),N(7)-dimethyl 5'-triphosphoguanosine)-ribonucleoside in snoRNA + S-adenosyl-L-methionine = a 5'-end (N(2),N(2),N(7)-trimethyl 5'-triphosphoguanosine)-ribonucleoside in snoRNA + S-adenosyl-L-homocysteine + H(+). Substrate inhibited by S-adenosyl-L-homocysteine. Catalyzes the two serial methylation steps for the conversion of the 7-monomethylguanosine (m(7)G) caps of snRNAs and snoRNAs to a 2,2,7-trimethylguanosine (m(2,2,7)G) cap structure. The enzyme is specific for guanine, and N7 methylation must precede N2 methylation. Required for pre-mRNA splicing, pre-rRNA processing and small ribosomal subunit synthesis. Involved in nucleolar structural organization. The chain is Trimethylguanosine synthase (tgs1) from Schizosaccharomyces pombe (strain 972 / ATCC 24843) (Fission yeast).